The following is a 108-amino-acid chain: UPF0145 protein ACIAD2946 (108 aa).

Belongs to the UPF0145 family.

The polypeptide is UPF0145 protein ACIAD2946 (Acinetobacter baylyi (strain ATCC 33305 / BD413 / ADP1)).